A 382-amino-acid chain; its full sequence is Dual-specificity RNA methyltransferase RlmN (382 aa).

E94 acts as the Proton acceptor in catalysis. The Radical SAM core domain occupies 100 to 336 (EANRGTLCVS…NTITRKTRGD (237 aa)). A disulfide bridge connects residues C107 and C342. C114, C118, and C121 together coordinate [4Fe-4S] cluster. Residues 168-169 (GE), S200, 222-224 (SLH), and N299 each bind S-adenosyl-L-methionine. Residue C342 is the S-methylcysteine intermediate of the active site.

It belongs to the radical SAM superfamily. RlmN family. The cofactor is [4Fe-4S] cluster.

The protein localises to the cytoplasm. It carries out the reaction adenosine(2503) in 23S rRNA + 2 reduced [2Fe-2S]-[ferredoxin] + 2 S-adenosyl-L-methionine = 2-methyladenosine(2503) in 23S rRNA + 5'-deoxyadenosine + L-methionine + 2 oxidized [2Fe-2S]-[ferredoxin] + S-adenosyl-L-homocysteine. The enzyme catalyses adenosine(37) in tRNA + 2 reduced [2Fe-2S]-[ferredoxin] + 2 S-adenosyl-L-methionine = 2-methyladenosine(37) in tRNA + 5'-deoxyadenosine + L-methionine + 2 oxidized [2Fe-2S]-[ferredoxin] + S-adenosyl-L-homocysteine. Its function is as follows. Specifically methylates position 2 of adenine 2503 in 23S rRNA and position 2 of adenine 37 in tRNAs. m2A2503 modification seems to play a crucial role in the proofreading step occurring at the peptidyl transferase center and thus would serve to optimize ribosomal fidelity. The polypeptide is Dual-specificity RNA methyltransferase RlmN (Legionella pneumophila (strain Paris)).